An 815-amino-acid chain; its full sequence is Chromatin assembly factor 1 subunit FAS1 (815 aa).

5 disordered regions span residues 1 to 39 (MDEV…TSEE), 292 to 330 (NNKE…KKQL), 434 to 477 (KLST…KKSR), 502 to 577 (QVVK…EGVQ), and 791 to 815 (RCLP…NENA). Composition is skewed to basic and acidic residues over residues 10-21 (NENRKTMIEPKK) and 292-328 (NNKE…ELKK). Residues 244–336 (EEKLLLKQLE…KKQLQVQKQA (93 aa)) adopt a coiled-coil conformation. Acidic residues-rich tracts occupy residues 516–532 (LDYE…EEAG) and 554–576 (DDED…DEGV). Basic and acidic residues predominate over residues 806–815 (AAERLENENA).

The protein belongs to the CHAF1A family. As to quaternary structure, component of the chromatin assembly factor 1 (CAF-1) complex, composed of FAS1, FAS2 and MSI1. Interacts with CYP71. Expressed in the shoot apical meristem, young leaf primordia, root tip and first lateral root primordium at the hypocotyl/root junction.

Its subcellular location is the nucleus. Functionally, component of the chromatin assembly factor complex (CAF-1) involved in chromatin assembly following DNA replication and DNA repair. Assembles histone octamers onto replicating DNA in vitro. Required for several aspects of development, including seedling growth and leaf hair differentiation. Plays a critical role in the organization of shoot apical meristem (SAM) and root apical meristem (RAM) during postembryonic development by facilitating stable maintenance of gene expression states. Seems not required to maintain transcriptional repression of heterochromatic genes. Involved in heterologous recombination. May repress endocycle. This Arabidopsis thaliana (Mouse-ear cress) protein is Chromatin assembly factor 1 subunit FAS1 (FAS1).